A 1153-amino-acid chain; its full sequence is Otoancorin (1153 aa).

An N-terminal signal peptide occupies residues 1–22; sequence MSQEPTTYSLFLFLFLSHGVSS. The N-linked (GlcNAc...) asparagine glycan is linked to Asn-156. Asn-211 carries an N-linked (GlcNAc...) (complex) asparagine glycan. N-linked (GlcNAc...) asparagine glycosylation is found at Asn-244, Asn-289, Asn-321, Asn-394, Asn-398, Asn-460, Asn-544, Asn-812, Asn-911, and Asn-974. Residues 1109-1128 are disordered; sequence HSWQDAPASAGPTRTSSSRS. Ala-1130 carries the GPI-anchor amidated alanine lipid modification. A propeptide spans 1131–1153 (removed in mature form); sequence GALQSWGLWLGCPLLVLMAKLLW.

It belongs to the stereocilin family.

It localises to the apical cell membrane. It is found in the secreted. The protein localises to the extracellular space. Its subcellular location is the extracellular matrix. May act as an adhesion molecule. The polypeptide is Otoancorin (OTOA) (Homo sapiens (Human)).